The following is an 81-amino-acid chain: Putative defensin-like protein 56 (81 aa).

The N-terminal stretch at 1–23 (MNITKAYVIFFLVVILTNSLSNS) is a signal peptide. 4 disulfide bridges follow: C46-C80, C50-C73, C59-C78, and C63-C79.

This sequence belongs to the DEFL family.

The protein resides in the secreted. In Arabidopsis thaliana (Mouse-ear cress), this protein is Putative defensin-like protein 56.